The sequence spans 1220 residues: MGDMANNSVAYSGVKNSLKEANHDGDFGITLTELRALMELRSTDALRKIQESYGDVYGICTKLKTSPNEGLSGNPADLERREAVFGKNFIPPKKPKTFLQLVWEALQDVTLIILEIAAIVSLGLSFYQPPEGDNALCGEVSVGEEEGEGETGWIEGAAILLSVVCVVLVTAFNDWSKEKQFRGLQSRIEQEQKFTVIRGGQVIQIPVADITVGDIAQVKYGDLLPADGILIQGNDLKIDESSLTGESDHVKKSLDKDPLLLSGTHVMEGSGRMVVTAVGVNSQTGIIFTLLGAGGEEEEKKDEKKKEKKNKKQDGAIENRNKAKAQDGAAMEMQPLKSEEGGDGDEKDKKKANLPKKEKSVLQGKLTKLAVQIGKAGLLMSAITVIILVLYFVIDTFWVQKRPWLAECTPIYIQYFVKFFIIGVTVLVVAVPEGLPLAVTISLAYSVKKMMKDNNLVRHLDACETMGNATAICSDKTGTLTMNRMTVVQAYINEKHYKKVPEPEAIPPNILSYLVTGISVNCAYTSKILPPEKEGGLPRHVGNKTECALLGFLLDLKRDYQDVRNEIPEEALYKVYTFNSVRKSMSTVLKNSDGSFRIFSKGASEIILKKCFKILSANGEAKVFRPRDRDDIVKTVIEPMASEGLRTICLAFRDFPAGEPEPEWDNENDVVTGLTCIAVVGIEDPVRPEVPEAIKKCQRAGITVRMVTGDNINTARAIATKCGILHPGEDFLCLEGKDFNRRIRNEKGEIEQERIDKIWPKLRVLARSSPTDKHTLVKGIIDSTVSEQRQVVAVTGDGTNDGPALKKADVGFAMGIAGTDVAKEASDIILTDDNFTSIVKAVMWGRNVYDSISKFLQFQLTVNVVAVIVAFTGACITQDSPLKAVQMLWVNLIMDTLASLALATEPPTESLLLRKPYGRNKPLISRTMMKNILGHAFYQLVVVFTLLFAGEKFFDIDSGRNAPLHAPPSEHYTIVFNTFVLMQLFNEINARKIHGERNVFEGIFNNAIFCTIVLGTFVVQIIIVQFGGKPFSCSELSIEQWLWSIFLGMGTLLWGQLISTIPTSRLKFLKEAGHGTQKEEIPEEELAEDVEEIDHAERELRRGQILWFRGLNRIQTQIRVVNAFRSSLYEGLEKPESRSSIHNFMTHPEFRIEDSEPHIPLIDDTDAEDDAPTKRNSSPPPSPNKNNNAVDSGIHLTIEMNKSATSSSPGSPLHSLETSL.

The residue at position 2 (glycine 2) is an N-acetylglycine. The Cytoplasmic segment spans residues 2–105 (GDMANNSVAY…KTFLQLVWEA (104 aa)). Phosphoserine is present on residues serine 8 and serine 17. Residues 106–126 (LQDVTLIILEIAAIVSLGLSF) form a helical membrane-spanning segment. At 127–154 (YQPPEGDNALCGEVSVGEEEGEGETGWI) the chain is on the extracellular side. A helical transmembrane segment spans residues 155–175 (EGAAILLSVVCVVLVTAFNDW). Over 176–366 (SKEKQFRGLQ…KEKSVLQGKL (191 aa)) the chain is Cytoplasmic. The interval 297-356 (EEEKKDEKKKEKKNKKQDGAIENRNKAKAQDGAAMEMQPLKSEEGGDGDEKDKKKANLPK) is disordered. Basic and acidic residues-rich tracts occupy residues 312-325 (KQDG…KAKA) and 337-356 (KSEE…NLPK). At serine 338 the chain carries Phosphoserine. Residues 367-386 (TKLAVQIGKAGLLMSAITVI) traverse the membrane as a helical segment. Over 387–418 (ILVLYFVIDTFWVQKRPWLAECTPIYIQYFVK) the chain is Extracellular. Residues 419 to 439 (FFIIGVTVLVVAVPEGLPLAV) form a helical membrane-spanning segment. Topologically, residues 440–855 (TISLAYSVKK…RNVYDSISKF (416 aa)) are cytoplasmic. Aspartate 475 acts as the 4-aspartylphosphate intermediate in catalysis. Mg(2+)-binding residues include aspartate 475, threonine 477, and aspartate 797. A helical membrane pass occupies residues 856–876 (LQFQLTVNVVAVIVAFTGACI). Over 877-882 (TQDSPL) the chain is Extracellular. The helical transmembrane segment at 883 to 903 (KAVQMLWVNLIMDTLASLALA) threads the bilayer. Topologically, residues 904-927 (TEPPTESLLLRKPYGRNKPLISRT) are cytoplasmic. A helical transmembrane segment spans residues 928–948 (MMKNILGHAFYQLVVVFTLLF). At 949–971 (AGEKFFDIDSGRNAPLHAPPSEH) the chain is on the extracellular side. Residues 972 to 991 (YTIVFNTFVLMQLFNEINAR) form a helical membrane-spanning segment. Residues 992 to 1005 (KIHGERNVFEGIFN) lie on the Cytoplasmic side of the membrane. The chain crosses the membrane as a helical span at residues 1006 to 1027 (NAIFCTIVLGTFVVQIIIVQFG). Over 1028-1039 (GKPFSCSELSIE) the chain is Extracellular. A helical transmembrane segment spans residues 1040–1060 (QWLWSIFLGMGTLLWGQLIST). At 1061-1220 (IPTSRLKFLK…SPLHSLETSL (160 aa)) the chain is on the cytoplasmic side. The tract at residues 1100–1117 (LRRGQILWFRGLNRIQTQ) is calmodulin-binding subdomain A. At threonine 1116 the chain carries Phosphothreonine; by PKC. The segment at 1118–1220 (IRVVNAFRSS…SPLHSLETSL (103 aa)) is required for basolateral membrane targeting. A phosphoserine mark is found at serine 1140 and serine 1155. Positions 1160-1220 (PLIDDTDAED…SPLHSLETSL (61 aa)) are disordered. Threonine 1165 is modified (phosphothreonine). Phosphoserine occurs at positions 1178 and 1182. A compositionally biased stretch (polar residues) spans 1200–1220 (MNKSATSSSPGSPLHSLETSL).

The protein belongs to the cation transport ATPase (P-type) (TC 3.A.3) family. Type IIB subfamily. In terms of assembly, monomer. Dimer. Oligomer. Calmodulin binding. Interacts with PDZD11. Interacts with SLC35G1 and STIM1. Interacts with YWHAE; interacts with the monomeric and dimeric forms of the YWHAE but prefer the monomer form; this interaction inhibits calcium-transporting ATPase activity. Interacts with NPTN; this interaction stabilizes ATP2B1 and increases ATPase activity; this interaction controls T cell calcium homeostasis following T cell activation. Interacts with EPB41; regulates small intestinal calcium absorption through regulation of membrane expression of ATP2B1. As to expression, expressed in the retina, with strongest expression in the outer plexiform layer and lower expression levels in the inner nuclear layer and the inner plexiform layer. Specifically expressed in the following retinal cell types: photoreceptor cells, cone bipolar cells and horizontal cells. Expressed in osteoclasts (at protein level). Expressed at highest levels in brain, intestine, kidney, and stomach, and at lower levels in liver, lung, aorta, portal vein, urinary bladder, diaphragm, seminal vesicles and testes. Expressed in small intestinal epithelium.

The protein resides in the cell membrane. The protein localises to the basolateral cell membrane. It is found in the synapse. Its subcellular location is the presynaptic cell membrane. It localises to the cytoplasmic vesicle. The protein resides in the secretory vesicle. The protein localises to the synaptic vesicle membrane. It catalyses the reaction Ca(2+)(in) + ATP + H2O = Ca(2+)(out) + ADP + phosphate + H(+). Catalyzes the hydrolysis of ATP coupled with the transport of calcium from the cytoplasm to the extracellular space thereby maintaining intracellular calcium homeostasis. Plays a role in blood pressure regulation through regulation of intracellular calcium concentration and nitric oxide production leading to regulation of vascular smooth muscle cells vasoconstriction. Positively regulates bone mineralization through absorption of calcium from the intestine. Plays dual roles in osteoclast differentiation and survival by regulating RANKL-induced calcium oscillations in preosteoclasts and mediating calcium extrusion in mature osteoclasts. Regulates insulin sensitivity through calcium/calmodulin signaling pathway by regulating AKT1 activation and NOS3 activation in endothelial cells. May play a role in synaptic transmission by modulating calcium and proton dynamics at the synaptic vesicles. The protein is Plasma membrane calcium-transporting ATPase 1 of Mus musculus (Mouse).